The chain runs to 372 residues: uncharacterized protein (372 aa).

This is an uncharacterized protein from Mycobacterium tuberculosis (strain CDC 1551 / Oshkosh).